A 23-amino-acid polypeptide reads, in one-letter code: Potassium channel toxin alpha-KTx 13.4 (23 aa).

Intrachain disulfides connect C2–C15, C5–C20, and C9–C22. Residues 13–20 (GKCINGKC) are interaction with Ca(2+)-activated K(+) channels. Y23 is modified (tyrosine amide).

As to expression, expressed by the venom gland.

The protein localises to the secreted. Its function is as follows. Blocks the potassium channel Shaker B. This is Potassium channel toxin alpha-KTx 13.4 from Tityus stigmurus (Brazilian scorpion).